A 124-amino-acid polypeptide reads, in one-letter code: Large ribosomal subunit protein bL12 (124 aa).

The protein belongs to the bacterial ribosomal protein bL12 family. Homodimer. Part of the ribosomal stalk of the 50S ribosomal subunit. Forms a multimeric L10(L12)X complex, where L10 forms an elongated spine to which 2 to 4 L12 dimers bind in a sequential fashion. Binds GTP-bound translation factors.

Forms part of the ribosomal stalk which helps the ribosome interact with GTP-bound translation factors. Is thus essential for accurate translation. In Burkholderia cenocepacia (strain ATCC BAA-245 / DSM 16553 / LMG 16656 / NCTC 13227 / J2315 / CF5610) (Burkholderia cepacia (strain J2315)), this protein is Large ribosomal subunit protein bL12.